A 467-amino-acid chain; its full sequence is ATP synthase subunit beta (467 aa).

150–157 (GGAGVGKT) is a binding site for ATP.

Belongs to the ATPase alpha/beta chains family. As to quaternary structure, F-type ATPases have 2 components, CF(1) - the catalytic core - and CF(0) - the membrane proton channel. CF(1) has five subunits: alpha(3), beta(3), gamma(1), delta(1), epsilon(1). CF(0) has three main subunits: a(1), b(2) and c(9-12). The alpha and beta chains form an alternating ring which encloses part of the gamma chain. CF(1) is attached to CF(0) by a central stalk formed by the gamma and epsilon chains, while a peripheral stalk is formed by the delta and b chains.

The protein resides in the cell inner membrane. The enzyme catalyses ATP + H2O + 4 H(+)(in) = ADP + phosphate + 5 H(+)(out). In terms of biological role, produces ATP from ADP in the presence of a proton gradient across the membrane. The catalytic sites are hosted primarily by the beta subunits. This Vibrio alginolyticus protein is ATP synthase subunit beta.